Reading from the N-terminus, the 303-residue chain is Ribosomal protein L11 methyltransferase (303 aa).

S-adenosyl-L-methionine-binding residues include Thr152, Gly173, Asp195, and Asn239.

The protein belongs to the methyltransferase superfamily. PrmA family.

It localises to the cytoplasm. The catalysed reaction is L-lysyl-[protein] + 3 S-adenosyl-L-methionine = N(6),N(6),N(6)-trimethyl-L-lysyl-[protein] + 3 S-adenosyl-L-homocysteine + 3 H(+). In terms of biological role, methylates ribosomal protein L11. The chain is Ribosomal protein L11 methyltransferase from Desulforapulum autotrophicum (strain ATCC 43914 / DSM 3382 / VKM B-1955 / HRM2) (Desulfobacterium autotrophicum).